The sequence spans 118 residues: Late cornified envelope protein 1F (118 aa).

Residues 1–10 (MSCQQSQQQC) show a composition bias toward low complexity. Disordered stretches follow at residues 1 to 23 (MSCQQSQQQCQPPPKCTPKCPPK) and 82 to 118 (RRRSHRHRPQSSDCCSQPSAGSSCCGGGSGQHSGGCC). The segment covering 11–23 (QPPPKCTPKCPPK) has biased composition (pro residues). The segment covering 95-104 (CCSQPSAGSS) has biased composition (low complexity). Residues 105-118 (CCGGGSGQHSGGCC) are compositionally biased toward gly residues.

It belongs to the LCE family. As to expression, skin-specific. Expression was readily detected in adult trunk skin, adult arm skin, fetal skin, penal skin, vulva, esophagus and tongue. Not expressed in the cervix, rectum, lung, colon, or placenta. Expression is observed in the fibroblasts.

In terms of biological role, precursors of the cornified envelope of the stratum corneum. The sequence is that of Late cornified envelope protein 1F (LCE1F) from Homo sapiens (Human).